The sequence spans 418 residues: MTLLALGINHKTAPVSLRERVSFSPDKLDQALDSLLAQPMVQGGVVLSTCNRTELYLSVEEQDNLQEALIRWLCDYHNLNEEDLRKSLYWHQDNDAVSHLMRVASGLDSLVLGEPQILGQVKKAFADSQKGHMKASELERMFQKSFSVAKRVRTETDIGASAVSVAFAACTLARQIFESLSTVTVLLVGAGETIELVARHLREHKVQKMIIANRTRERAQILADEVGAEVIALSDVDERLREADIIISSTASPLPIIGKGMVERALKSRRNQPMLLVDIAVPRDVEPEVGKLANAYLYSVDDLQSIISHNLAQRKAAAVEAETIVAQETSEFMAWLRAQSASETIREYRSQAEQVRDELTAKALAALEQGGDAQAIMQDLAWKLTNRLIHAPTKLLQQAARDGDNERLNILRDSLGLE.

Substrate-binding positions include 49–52 (TCNR), Ser-109, 114–116 (EPQ), and Gln-120. Cys-50 functions as the Nucleophile in the catalytic mechanism. 189–194 (GAGETI) provides a ligand contact to NADP(+).

Belongs to the glutamyl-tRNA reductase family. As to quaternary structure, homodimer.

The enzyme catalyses (S)-4-amino-5-oxopentanoate + tRNA(Glu) + NADP(+) = L-glutamyl-tRNA(Glu) + NADPH + H(+). The protein operates within porphyrin-containing compound metabolism; protoporphyrin-IX biosynthesis; 5-aminolevulinate from L-glutamyl-tRNA(Glu): step 1/2. Its function is as follows. Catalyzes the NADPH-dependent reduction of glutamyl-tRNA(Glu) to glutamate 1-semialdehyde (GSA). The polypeptide is Glutamyl-tRNA reductase (Shigella dysenteriae serotype 1 (strain Sd197)).